A 570-amino-acid polypeptide reads, in one-letter code: Aspartyl aminopeptidase (570 aa).

H86 is a Zn(2+) binding site. H160 provides a ligand contact to substrate. D324 is a Zn(2+) binding site. E379 contacts substrate. Residues E380 and D434 each coordinate Zn(2+). Residues D434, H437, K462, and Y469 each contribute to the substrate site. H534 is a binding site for Zn(2+).

This sequence belongs to the peptidase M18 family. As to quaternary structure, homododecamer composed of homodimers and homotrimers that assemble into a tetrahedron shape to create a central tunnel containing the active sites. Homooctamer. Zn(2+) is required as a cofactor.

It is found in the cytoplasm. It carries out the reaction Release of an N-terminal aspartate or glutamate from a peptide, with a preference for aspartate.. Activated by Co(2+). Inhibited by high concentrations (&gt;1mM) of Zn(2+). Functionally, aminopeptidase which specifically catalyzes the removal of glutamic acid or aspartic acid residues from the N-terminus of peptides. May play a role in the final step of host hemoglobin catabolism, by cleaving hemoglobin-derived oligopeptides in the cytoplasm. This Plasmodium falciparum (isolate 3D7) protein is Aspartyl aminopeptidase.